The sequence spans 365 residues: Annexin B22 (365 aa).

Annexin repeat units lie at residues 34–105 (FSAS…QLIV), 106–185 (DTPY…SLVQ), 211–283 (ELAE…AVLR), and 287–358 (DRPS…VLMG). Ca(2+) contacts are provided by Met-47, Gly-49, Gly-51, Thr-52, Glu-54, Asp-91, Met-119, Gly-121, Gly-123, Asp-126, Lys-169, Glu-171, Thr-172, Glu-177, Asp-273, Met-300, Gly-302, Leu-303, Gly-304, and Asp-344.

The protein belongs to the annexin family. As to quaternary structure, homodimer.

Its subcellular location is the tegument. It is found in the secreted. The protein localises to the extracellular exosome. The protein resides in the host cell. Its function is as follows. Involved in reproduction of the worm. Involved in host-parasite interaction. Delivered into the host cell by means of parasite exosomes. Binds to acidic phospholipid membranes in a calcium-dependent manner in vitro. Causes aggregation of liposomes in the presence of calcium, but not in its absence. Likely to promote membrane fusion. May provide structural integrity within the tegument. This is Annexin B22 from Schistosoma mansoni (Blood fluke).